We begin with the raw amino-acid sequence, 248 residues long: Methyl-coenzyme M reductase subunit gamma (248 aa).

Position 121 (R121) interacts with coenzyme M.

It belongs to the methyl-coenzyme M reductase gamma subunit family. MCR is a hexamer of two alpha, two beta, and two gamma chains, forming a dimer of heterotrimers. Requires coenzyme F430 as cofactor.

Its subcellular location is the cytoplasm. The enzyme catalyses coenzyme B + methyl-coenzyme M = methane + coenzyme M-coenzyme B heterodisulfide. The protein operates within one-carbon metabolism; methyl-coenzyme M reduction; methane from methyl-coenzyme M: step 1/1. Its function is as follows. Component of the methyl-coenzyme M reductase (MCR) I that catalyzes the reductive cleavage of methyl-coenzyme M (CoM-S-CH3 or 2-(methylthio)ethanesulfonate) using coenzyme B (CoB or 7-mercaptoheptanoylthreonine phosphate) as reductant which results in the production of methane and the mixed heterodisulfide of CoB and CoM (CoM-S-S-CoB). This is the final step in methanogenesis. The sequence is that of Methyl-coenzyme M reductase subunit gamma (mcrG) from Methanosarcina barkeri (strain Fusaro / DSM 804).